Reading from the N-terminus, the 630-residue chain is Amino acid transporter heavy chain SLC3A2 (630 aa).

N-acetylmethionine is present on Met1. Residue Glu2 is modified to N-acetylserine. Residue Glu2 is modified to Phosphoserine. The disordered stretch occupies residues 15–39 (IPRQLPGSHSEAGVQGLSAGDDSEL). Topologically, residues 102–184 (MSQDTEVDMK…SPGWVRTRWA (83 aa)) are cytoplasmic. At Ser103 the chain carries Phosphoserine. Thr106 bears the Phosphothreonine mark. Residue Ser134 is modified to Phosphoserine. Lys147 is covalently cross-linked (Glycyl lysine isopeptide (Lys-Gly) (interchain with G-Cter in ubiquitin)). Ser165 bears the Phosphoserine mark. Residue Lys166 forms a Glycyl lysine isopeptide (Lys-Gly) (interchain with G-Cter in SUMO2) linkage. A helical; Signal-anchor for type II membrane protein transmembrane segment spans residues 185–205 (LLLLFWLGWLGMLAGAVVIIV). Over 206–630 (RAPRCRELPA…GLLLRFPYAA (425 aa)) the chain is Extracellular. 2 N-linked (GlcNAc...) asparagine glycosylation sites follow: Asn365 and Asn381. Ser406, Ser408, and Ser410 each carry phosphoserine. N-linked (GlcNAc...) (complex) asparagine glycosylation occurs at Asn424. An N-linked (GlcNAc...) asparagine glycan is attached at Asn506. 2 positions are modified to phosphoserine: Ser527 and Ser531.

Disulfide-linked heterodimer with a non-glycosylated catalytic light subunit (SLC7A5, SLC7A6, SLC7A7, SLC7A8, SLC7A10 or SLC7A11). Interacts with TLCD3A/CT120. Interacts with ICAM1. Constitutively and specifically associates with beta-1 integrins (alpha-2/beta-1, alpha-3/beta-1, alpha-5/beta-1 and alpha-6/beta-1), but minimally with alpha-4/beta-1. Interacts with LAPTM4B; recruits SLC3A2 and SLC7A5/LAT1 to lysosomes to promote leucine uptake into these organelles and is required for mTORC1 activation. In terms of assembly, (Microbial infection) Interacts with hepatitis C virus/HCV envelope glycoprotein E2; the interaction may facilitate viral entry into host cell. N-glycosylated; N-glycosylation is crucial for trafficking and stability of SLC3A2 to the plasma membrane. Post-translationally, phosphorylation on Ser-406; Ser-408 or Ser-410 and on Ser-527 or Ser-531 by ecto-protein kinases favors heterotypic cell-cell interactions. In terms of tissue distribution, expressed ubiquitously in all tissues tested with highest levels detected in kidney, placenta and testis and weakest level in thymus. During gestation, expression in the placenta was significantly stronger at full-term than at the mid-trimester stage. Expressed in HUVECS and at low levels in resting peripheral blood T-lymphocytes and quiescent fibroblasts. Also expressed in fetal liver and in the astrocytic process of primary astrocytic gliomas. Expressed in retinal endothelial cells and in the intestinal epithelial cell line C2BBe1.

The protein localises to the apical cell membrane. The protein resides in the cell membrane. Its subcellular location is the cell junction. It localises to the lysosome membrane. It is found in the melanosome. The protein localises to the basolateral cell membrane. Acts as a chaperone that facilitates biogenesis and trafficking of functional transporters heterodimers to the plasma membrane. Forms heterodimer with SLC7 family transporters (SLC7A5, SLC7A6, SLC7A7, SLC7A8, SLC7A10 and SLC7A11), a group of amino-acid antiporters. Heterodimers function as amino acids exchangers, the specificity of the substrate depending on the SLC7A subunit. Heterodimers SLC3A2/SLC7A6 or SLC3A2/SLC7A7 mediate the uptake of dibasic amino acids. Heterodimer SLC3A2/SLC7A11 functions as an antiporter by mediating the exchange of extracellular anionic L-cystine and intracellular L-glutamate across the cellular plasma membrane. SLC3A2/SLC7A10 translocates small neutral L- and D-amino acids across the plasma membrane. SLC3A2/SLC75 or SLC3A2/SLC7A8 translocates neutral amino acids with broad specificity, thyroid hormones and L-DOPA. SLC3A2 is essential for plasma membrane localization, stability, and the transport activity of SLC7A5 and SLC7A8. When associated with LAPTM4B, the heterodimer SLC7A5 is recruited to lysosomes to promote leucine uptake into these organelles, and thereby mediates mTORC1 activation. Modulates integrin-related signaling and is essential for integrin-dependent cell spreading, migration and tumor progression. Its function is as follows. (Microbial infection) In case of hepatitis C virus/HCV infection, the complex formed by SLC3A2 and SLC7A5/LAT1 plays a role in HCV propagation by facilitating viral entry into host cell and increasing L-leucine uptake-mediated mTORC1 signaling activation, thereby contributing to HCV-mediated pathogenesis. Functionally, (Microbial infection) Acts as a receptor for malaria parasite Plasmodium vivax (Thai isolate) in immature red blood cells. The protein is Amino acid transporter heavy chain SLC3A2 of Homo sapiens (Human).